The following is a 351-amino-acid chain: Methylthioribose-1-phosphate isomerase (351 aa).

Substrate-binding positions include 51 to 53, Arg-94, and Gln-199; that span reads RGA. Catalysis depends on Asp-240, which acts as the Proton donor. Residue 250 to 251 participates in substrate binding; it reads NK.

The protein belongs to the EIF-2B alpha/beta/delta subunits family. MtnA subfamily. As to quaternary structure, homodimer.

It catalyses the reaction 5-(methylsulfanyl)-alpha-D-ribose 1-phosphate = 5-(methylsulfanyl)-D-ribulose 1-phosphate. The protein operates within amino-acid biosynthesis; L-methionine biosynthesis via salvage pathway; L-methionine from S-methyl-5-thio-alpha-D-ribose 1-phosphate: step 1/6. Catalyzes the interconversion of methylthioribose-1-phosphate (MTR-1-P) into methylthioribulose-1-phosphate (MTRu-1-P). The polypeptide is Methylthioribose-1-phosphate isomerase (Bacillus anthracis).